The chain runs to 150 residues: Large ribosomal subunit protein bL9 (150 aa).

It belongs to the bacterial ribosomal protein bL9 family.

In terms of biological role, binds to the 23S rRNA. The sequence is that of Large ribosomal subunit protein bL9 from Shewanella piezotolerans (strain WP3 / JCM 13877).